We begin with the raw amino-acid sequence, 286 residues long: MERRLGVRAWVKENRGSFQPPVCNKLMHQEQLKVMFIGGPNTRKDYHIEEGEEVFYQLEGDMVLRVLEQGKHRDVVIRQGEIFLLPARVPHSPQRFANTVGLVVERRRLETELDGLRYYVGDTMDVLFEKWFYCKDLGTQLAPIIQEFFSSEQYRTGKPIPDQLLKEPPFPLSTRSIMEPMSLDAWLDSHHRELQAGTPLSLFGDTYETQVIAYGQGSSEGLRQNVDVWLWQLEGSSVVTMGGRRLSLAPDDSLLVLAGTSYAWERTQGSVALSVTQDPACKKPLG.

Positions 1–160 are domain A (catalytic); sequence MERRLGVRAW…SEQYRTGKPI (160 aa). Arg-43 provides a ligand contact to O2. Residues His-47, Glu-53, and His-91 each contribute to the Fe cation site. Glu-53 is a binding site for substrate. The substrate site is built by Arg-95 and Glu-105. A linker region spans residues 161–177; sequence PDQLLKEPPFPLSTRSI. The interval 178–286 is domain B; that stretch reads MEPMSLDAWL…QDPACKKPLG (109 aa).

The protein belongs to the 3-HAO family. Monomer. The cofactor is Fe(2+).

The protein resides in the cytoplasm. Its subcellular location is the cytosol. It carries out the reaction 3-hydroxyanthranilate + O2 = (2Z,4Z)-2-amino-3-carboxymuconate 6-semialdehyde. It participates in cofactor biosynthesis; NAD(+) biosynthesis; quinolinate from L-kynurenine: step 3/3. Functionally, catalyzes the oxidative ring opening of 3-hydroxyanthranilate to 2-amino-3-carboxymuconate semialdehyde, which spontaneously cyclizes to quinolinate. The protein is 3-hydroxyanthranilate 3,4-dioxygenase of Homo sapiens (Human).